The sequence spans 212 residues: Inner membrane-spanning protein YciB (212 aa).

The next 6 membrane-spanning stretches (helical) occupy residues F19 to L39, A47 to L67, A82 to W102, T105 to G122, L147 to F167, and L177 to L197.

It belongs to the YciB family.

It localises to the cell inner membrane. Plays a role in cell envelope biogenesis, maintenance of cell envelope integrity and membrane homeostasis. This Thioalkalivibrio sulfidiphilus (strain HL-EbGR7) protein is Inner membrane-spanning protein YciB.